Reading from the N-terminus, the 691-residue chain is tRNA-dihydrouridine(47) synthase [NAD(P)(+)]-like (691 aa).

Position 2 is an N-acetylserine (Ser2). Residues 55 to 94 (PPPPSRSVKQNDAADVRAPQSGLVQEKKSKRQLKRERREQ) form a disordered region. 2 consecutive C3H1-type zinc fingers follow at residues 94–125 (QSTINLCPQVARTEDVDSCQYKDKCRFNHDIE) and 138–163 (QCPFVASGMKCAYGLSCRFLGSHRDI). The disordered stretch occupies residues 259 to 286 (LETEEVRPMKKAKSEDQKNSKTGDVGGV). Residues 262-279 (EEVRPMKKAKSEDQKNSK) are compositionally biased toward basic and acidic residues. FMN is bound by residues 344–346 (PLT) and Gln398. Cys429 acts as the Proton donor in catalysis. FMN-binding positions include Lys468, His498, 531-533 (NGD), and 556-557 (AR).

Belongs to the Dus family. Dus3 subfamily. FMN serves as cofactor.

It catalyses the reaction 5,6-dihydrouridine(47) in tRNA + NAD(+) = uridine(47) in tRNA + NADH + H(+). The enzyme catalyses 5,6-dihydrouridine(47) in tRNA + NADP(+) = uridine(47) in tRNA + NADPH + H(+). The catalysed reaction is a 5,6-dihydrouridine in mRNA + NAD(+) = a uridine in mRNA + NADH + H(+). It carries out the reaction a 5,6-dihydrouridine in mRNA + NADP(+) = a uridine in mRNA + NADPH + H(+). Functionally, catalyzes the synthesis of dihydrouridine, a modified base found in the D-loop of most tRNAs. Specifically modifies U47 in cytoplasmic tRNAs. Catalyzes the synthesis of dihydrouridine in some mRNAs, thereby affecting their translation. In Arabidopsis thaliana (Mouse-ear cress), this protein is tRNA-dihydrouridine(47) synthase [NAD(P)(+)]-like.